Consider the following 502-residue polypeptide: MNLRPEEISSIIKQQIERYDSAVEVVDVGTVIQVGDGIARVHGLEKAMSGELLEFPGGIYGMAMNLEEDNIGCIILGKFTEIREGDQVKRTGRIVEVPVGEAMIGRVVNALGQPIDGKGEIKTDKFRPIENIAPGVVYRKSVHEPLQTGLKSIDAIVPIGRGQRELIIGDRQTGKTAVAVDTIINQKGKDVICIYVAVGQKASTVAGVVKTLADHGAMDYSIVVSATASEPAPMLYIAPYSGCAMGEEFMYNGKHVLIIYDDLTKQAAAYRELSLLLKRPPGREAYPGDVFYLHSRLLERAAKLSPDLGSGSMTALPIIETQAGDVSAYIPTNVISITDGQIFLETDLFNAGFRPAINVGISVSRVGGSAQIKAMKQVAGQLRLDLAQYRELAAFAQFGSDLDKITQMRLTRGERMMEILKQKQYEPMVVEEQVVVLYAAVKGFLDDIPVDKIKSFEEEYLRTMRTTKADLLAKIRTEKALNDELNAEIEKAITEVKEGFLG.

Residue 169–176 (GDRQTGKT) participates in ATP binding.

This sequence belongs to the ATPase alpha/beta chains family. In terms of assembly, F-type ATPases have 2 components, CF(1) - the catalytic core - and CF(0) - the membrane proton channel. CF(1) has five subunits: alpha(3), beta(3), gamma(1), delta(1), epsilon(1). CF(0) has three main subunits: a(1), b(2) and c(9-12). The alpha and beta chains form an alternating ring which encloses part of the gamma chain. CF(1) is attached to CF(0) by a central stalk formed by the gamma and epsilon chains, while a peripheral stalk is formed by the delta and b chains.

It localises to the cell membrane. The enzyme catalyses ATP + H2O + 4 H(+)(in) = ADP + phosphate + 5 H(+)(out). In terms of biological role, produces ATP from ADP in the presence of a proton gradient across the membrane. The alpha chain is a regulatory subunit. The sequence is that of ATP synthase subunit alpha from Desulfitobacterium hafniense (strain DSM 10664 / DCB-2).